A 151-amino-acid polypeptide reads, in one-letter code: Transcriptional repressor NrdR (151 aa).

A zinc finger lies at 3 to 34 (CPHCGNCDDKVMESRTLAQGDCIRRRRECLAC). Residues 49-141 (FMVIKKDGRR…VYKQFSNLDE (93 aa)) form the ATP-cone domain.

It belongs to the NrdR family. Zn(2+) is required as a cofactor.

Functionally, negatively regulates transcription of bacterial ribonucleotide reductase nrd genes and operons by binding to NrdR-boxes. This Treponema denticola (strain ATCC 35405 / DSM 14222 / CIP 103919 / JCM 8153 / KCTC 15104) protein is Transcriptional repressor NrdR.